Consider the following 104-residue polypeptide: Co-chaperonin GroES 2 (104 aa).

Belongs to the GroES chaperonin family. In terms of assembly, heptamer of 7 subunits arranged in a ring. Interacts with the chaperonin GroEL.

It is found in the cytoplasm. Together with the chaperonin GroEL, plays an essential role in assisting protein folding. The GroEL-GroES system forms a nano-cage that allows encapsulation of the non-native substrate proteins and provides a physical environment optimized to promote and accelerate protein folding. GroES binds to the apical surface of the GroEL ring, thereby capping the opening of the GroEL channel. This chain is Co-chaperonin GroES 2, found in Rhodopseudomonas palustris (strain ATCC BAA-98 / CGA009).